We begin with the raw amino-acid sequence, 368 residues long: tRNA 2-selenouridine synthase (368 aa).

The region spanning 15–138 (FLNQHPIMDV…MRQYLIGVIE (124 aa)) is the Rhodanese domain. C98 (S-selanylcysteine intermediate) is an active-site residue.

This sequence belongs to the SelU family. In terms of assembly, monomer.

The catalysed reaction is 5-methylaminomethyl-2-thiouridine(34) in tRNA + selenophosphate + (2E)-geranyl diphosphate + H2O + H(+) = 5-methylaminomethyl-2-selenouridine(34) in tRNA + (2E)-thiogeraniol + phosphate + diphosphate. It catalyses the reaction 5-methylaminomethyl-2-thiouridine(34) in tRNA + (2E)-geranyl diphosphate = 5-methylaminomethyl-S-(2E)-geranyl-thiouridine(34) in tRNA + diphosphate. It carries out the reaction 5-methylaminomethyl-S-(2E)-geranyl-thiouridine(34) in tRNA + selenophosphate + H(+) = 5-methylaminomethyl-2-(Se-phospho)selenouridine(34) in tRNA + (2E)-thiogeraniol. The enzyme catalyses 5-methylaminomethyl-2-(Se-phospho)selenouridine(34) in tRNA + H2O = 5-methylaminomethyl-2-selenouridine(34) in tRNA + phosphate. Its function is as follows. Involved in the post-transcriptional modification of the uridine at the wobble position (U34) of tRNA(Lys), tRNA(Glu) and tRNA(Gln). Catalyzes the conversion of 2-thiouridine (S2U-RNA) to 2-selenouridine (Se2U-RNA). Acts in a two-step process involving geranylation of 2-thiouridine (S2U) to S-geranyl-2-thiouridine (geS2U) and subsequent selenation of the latter derivative to 2-selenouridine (Se2U) in the tRNA chain. The protein is tRNA 2-selenouridine synthase of Shewanella baltica (strain OS155 / ATCC BAA-1091).